The chain runs to 224 residues: Redox-sensing transcriptional repressor Rex (224 aa).

A DNA-binding region (H-T-H motif) is located at residues 17–56 (RYHRYLEELLKNDVKRISSRELSEKMGVTASQIRQDLNNF). NAD(+) is bound at residue 91 to 96 (GAGNLG).

Belongs to the transcriptional regulatory Rex family. In terms of assembly, homodimer.

The protein resides in the cytoplasm. In terms of biological role, modulates transcription in response to changes in cellular NADH/NAD(+) redox state. This Thermoanaerobacter sp. (strain X514) protein is Redox-sensing transcriptional repressor Rex.